The following is a 231-amino-acid chain: Small ribosomal subunit protein uS2 (231 aa).

Positions 1 to 23 (MKVTNLSEKEERGGELTEAEKEE) are disordered. A compositionally biased stretch (basic and acidic residues) spans 7–23 (SEKEERGGELTEAEKEE).

This sequence belongs to the universal ribosomal protein uS2 family.

This is Small ribosomal subunit protein uS2 (rps2) from Saccharolobus solfataricus (strain ATCC 35092 / DSM 1617 / JCM 11322 / P2) (Sulfolobus solfataricus).